Consider the following 487-residue polypeptide: Malonate-semialdehyde dehydrogenase (487 aa).

NAD(+) is bound by residues alanine 150, phenylalanine 152, lysine 176, glutamate 179, arginine 180, serine 229, and threonine 251. The Nucleophile role is filled by cysteine 284. Glutamate 382 lines the NAD(+) pocket.

Belongs to the aldehyde dehydrogenase family. IolA subfamily. In terms of assembly, homotetramer.

It carries out the reaction 3-oxopropanoate + NAD(+) + CoA + H2O = hydrogencarbonate + acetyl-CoA + NADH + H(+). It catalyses the reaction 2-methyl-3-oxopropanoate + NAD(+) + CoA + H2O = propanoyl-CoA + hydrogencarbonate + NADH + H(+). It functions in the pathway polyol metabolism; myo-inositol degradation into acetyl-CoA; acetyl-CoA from myo-inositol: step 7/7. Functionally, catalyzes the oxidation of malonate semialdehyde (MSA) and methylmalonate semialdehyde (MMSA) into acetyl-CoA and propanoyl-CoA, respectively. Is involved in a myo-inositol catabolic pathway. Bicarbonate, and not CO2, is the end-product of the enzymatic reaction. The sequence is that of Malonate-semialdehyde dehydrogenase from Bacillus subtilis (strain 168).